The primary structure comprises 854 residues: Probable inactive serine/threonine-protein kinase DDB_G0274821 (854 aa).

Residues 1-266 enclose the Protein kinase domain; sequence MPIKESFKRI…WPKLFIHPFF (266 aa). Residues Asn32 and Asn106 are each glycosylated (N-linked (GlcNAc...) asparagine). The tract at residues 116 to 135 is disordered; that stretch reads NNNNNNNNNNNNNNNNNNNN. Asn163, Asn279, Asn283, and Asn290 each carry an N-linked (GlcNAc...) asparagine glycan. A disordered region spans residues 289–331; the sequence is LNKSSSSSSSSSSSSSSSSSSSSSSSLSFQQQQQPNNISSPNL. Positions 292 to 322 are enriched in low complexity; the sequence is SSSSSSSSSSSSSSSSSSSSSSSLSFQQQQQ. N-linked (GlcNAc...) asparagine glycans are attached at residues Asn325, Asn347, and Asn365. Residues 384-408 form a disordered region; the sequence is IISPNRPSSPPLSSLSSCSSSSSSS. Asn414 is a glycosylation site (N-linked (GlcNAc...) asparagine). Residues 425 to 446 are disordered; that stretch reads NNNNNNNNNNNNNNNNNNNNNN. N-linked (GlcNAc...) asparagine glycans are attached at residues Asn520, Asn541, and Asn620. Residues 627 to 650 are disordered; that stretch reads SSPPPSSSSSSSSPSSPSSTSPSL. Residues 633–650 show a composition bias toward low complexity; it reads SSSSSSSPSSPSSTSPSL. N-linked (GlcNAc...) asparagine glycosylation occurs at Asn757. The helical transmembrane segment at 770-792 threads the bilayer; it reads HWRVQISFLNILFILITINNNFI.

The protein belongs to the protein kinase superfamily. Ser/Thr protein kinase family.

The protein resides in the membrane. The chain is Probable inactive serine/threonine-protein kinase DDB_G0274821 from Dictyostelium discoideum (Social amoeba).